The following is a 453-amino-acid chain: MQVTETLSEGLKHEFKISVPASDLDAKAGAKLVDLKDKVRINGFRPGKVPVAHLKKVYGRSVMAETIDQTIRDTNTQLFSERGFRLATEPKITMPSEQAEVEELLSGKTDLTYTVAIEVVPSIALADFKTFQVEKPVADVTDADVDEAIKRIADTNRGYAAKADGAKAESGDRVTINFKGTINGEVFEGGTGEGIQVVIGSNTFIPGFEEQLTGIGAGETRTLKVSFPKNYMNDKLAGQPAEFETTATSIEAPQDIAIDDEFAKTLGLESLDKLKEAARERLVAEFAGATRQRVKRALLDRLDEAHRFEAPPSLVDEEFNLMWNSVKAEMDSAGKTFADEDTTEDAAKEEYRKIADRRVRLGLVLSEIGEKNKITVTDDEVGRAVIERARQMPGREKEVWDYYRSNAQALAQLRAPIYEDKVVDFILELANVTEKKVSREDLYKDDEAEKTAA.

A PPIase FKBP-type domain is found at 171-256 (GDRVTINFKG…ATSIEAPQDI (86 aa)).

It belongs to the FKBP-type PPIase family. Tig subfamily.

It is found in the cytoplasm. The enzyme catalyses [protein]-peptidylproline (omega=180) = [protein]-peptidylproline (omega=0). In terms of biological role, involved in protein export. Acts as a chaperone by maintaining the newly synthesized protein in an open conformation. Functions as a peptidyl-prolyl cis-trans isomerase. This Bradyrhizobium diazoefficiens (strain JCM 10833 / BCRC 13528 / IAM 13628 / NBRC 14792 / USDA 110) protein is Trigger factor.